The primary structure comprises 291 residues: Tryptophan 2,3-dioxygenase (291 aa).

Substrate contacts are provided by residues 51 to 55, Tyr113, and Arg117; that span reads FIIQH. Position 240 (His240) interacts with heme. Thr254 serves as a coordination point for substrate.

The protein belongs to the tryptophan 2,3-dioxygenase family. As to quaternary structure, homotetramer. Heme serves as cofactor.

The catalysed reaction is L-tryptophan + O2 = N-formyl-L-kynurenine. Its pathway is amino-acid degradation; L-tryptophan degradation via kynurenine pathway; L-kynurenine from L-tryptophan: step 1/2. Functionally, heme-dependent dioxygenase that catalyzes the oxidative cleavage of the L-tryptophan (L-Trp) pyrrole ring and converts L-tryptophan to N-formyl-L-kynurenine. Catalyzes the oxidative cleavage of the indole moiety. The sequence is that of Tryptophan 2,3-dioxygenase from Myxococcus xanthus (strain DK1622).